The sequence spans 130 residues: Interferon alpha-inducible protein 27-like protein 2 (130 aa).

A run of 3 helical transmembrane segments spans residues 8–28, 43–63, and 66–86; these read AAVGGALAVGAVPVVLSAMGF, MSAAAIANGGGVSAGSLVATL, and VGAAGLSTSSNILLASVGSVL. Positions 93 to 130 are disordered; sequence SPSSSLPAEPEAKEDEARENVPQGEPPKPPLKSEKHEE.

This sequence belongs to the IFI6/IFI27 family.

The protein resides in the mitochondrion membrane. Plays a role in the apoptotic process and has a pro-apoptotic activity. This is Interferon alpha-inducible protein 27-like protein 2 from Homo sapiens (Human).